Consider the following 635-residue polypeptide: DNA-directed RNA polymerase subunit gamma (635 aa).

Zn(2+) is bound by residues cysteine 74, cysteine 76, cysteine 89, and cysteine 92. Residues aspartate 471, aspartate 473, and aspartate 475 each contribute to the Mg(2+) site.

It belongs to the RNA polymerase beta' chain family. RpoC1 subfamily. As to quaternary structure, in cyanobacteria the RNAP catalytic core is composed of 2 alpha, 1 beta, 1 beta', 1 gamma and 1 omega subunit. When a sigma factor is associated with the core the holoenzyme is formed, which can initiate transcription. It depends on Mg(2+) as a cofactor. The cofactor is Zn(2+).

It carries out the reaction RNA(n) + a ribonucleoside 5'-triphosphate = RNA(n+1) + diphosphate. Functionally, DNA-dependent RNA polymerase catalyzes the transcription of DNA into RNA using the four ribonucleoside triphosphates as substrates. This chain is DNA-directed RNA polymerase subunit gamma, found in Prochlorococcus marinus (strain NATL1A).